The chain runs to 268 residues: Thiazole synthase (268 aa).

K96 functions as the Schiff-base intermediate with DXP in the catalytic mechanism. Residues G157, 185–186 (AG), and 207–208 (NT) contribute to the 1-deoxy-D-xylulose 5-phosphate site. Residues 238–268 (PMRPREAASPSSPVEGVPFTPTGPRPGRGPQ) form a disordered region. Positions 258–268 (PTGPRPGRGPQ) are enriched in pro residues.

The protein belongs to the ThiG family. Homotetramer. Forms heterodimers with either ThiH or ThiS.

It localises to the cytoplasm. The catalysed reaction is [ThiS sulfur-carrier protein]-C-terminal-Gly-aminoethanethioate + 2-iminoacetate + 1-deoxy-D-xylulose 5-phosphate = [ThiS sulfur-carrier protein]-C-terminal Gly-Gly + 2-[(2R,5Z)-2-carboxy-4-methylthiazol-5(2H)-ylidene]ethyl phosphate + 2 H2O + H(+). It functions in the pathway cofactor biosynthesis; thiamine diphosphate biosynthesis. In terms of biological role, catalyzes the rearrangement of 1-deoxy-D-xylulose 5-phosphate (DXP) to produce the thiazole phosphate moiety of thiamine. Sulfur is provided by the thiocarboxylate moiety of the carrier protein ThiS. In vitro, sulfur can be provided by H(2)S. The chain is Thiazole synthase from Thermus thermophilus (strain ATCC 27634 / DSM 579 / HB8).